The following is a 61-amino-acid chain: Photosystem II reaction center protein K (61 aa).

A propeptide spanning residues 1-24 (MINIVSLVCIYINSVPYSSIFFLD) is cleaved from the precursor. Residues 36–56 (IVDIMPVIPLFFFLLAFVWQA) form a helical membrane-spanning segment.

This sequence belongs to the PsbK family. As to quaternary structure, PSII is composed of 1 copy each of membrane proteins PsbA, PsbB, PsbC, PsbD, PsbE, PsbF, PsbH, PsbI, PsbJ, PsbK, PsbL, PsbM, PsbT, PsbX, PsbY, PsbZ, Psb30/Ycf12, at least 3 peripheral proteins of the oxygen-evolving complex and a large number of cofactors. It forms dimeric complexes.

It localises to the plastid. The protein resides in the chloroplast thylakoid membrane. Functionally, one of the components of the core complex of photosystem II (PSII). PSII is a light-driven water:plastoquinone oxidoreductase that uses light energy to abstract electrons from H(2)O, generating O(2) and a proton gradient subsequently used for ATP formation. It consists of a core antenna complex that captures photons, and an electron transfer chain that converts photonic excitation into a charge separation. This is Photosystem II reaction center protein K from Lotus japonicus (Lotus corniculatus var. japonicus).